Here is a 112-residue protein sequence, read N- to C-terminus: Probable fatty acid-binding protein (112 aa).

This sequence belongs to the calycin superfamily. Fatty-acid binding protein (FABP) family.

This Anopheles gambiae (African malaria mosquito) protein is Probable fatty acid-binding protein.